Reading from the N-terminus, the 198-residue chain is Recombination protein RecR (198 aa).

Residues 58–73 (CSVCNNLTEKDPCDFC) form a C4-type zinc finger. Residues 81-175 (NLICVVESPK…KVTRIAHGLP (95 aa)) form the Toprim domain.

It belongs to the RecR family.

May play a role in DNA repair. It seems to be involved in an RecBC-independent recombinational process of DNA repair. It may act with RecF and RecO. In Halothermothrix orenii (strain H 168 / OCM 544 / DSM 9562), this protein is Recombination protein RecR.